Consider the following 203-residue polypeptide: Translation machinery-associated protein 16 (203 aa).

Residues 1–40 (MPKAPKGKSVGQEKKVIHPYSRKAAQITRKAHKQEKKEEL) form a disordered region. Position 9 is an ADP-ribosylserine (Ser-9).

The protein belongs to the TMA16 family. Associates with pre-60S ribosomal particles.

The protein resides in the nucleus. In terms of biological role, involved in the biogenesis of the 60S ribosomal subunit in the nucleus. The chain is Translation machinery-associated protein 16 (TMA16) from Bos taurus (Bovine).